A 360-amino-acid polypeptide reads, in one-letter code: Threonine synthase (360 aa).

An N6-(pyridoxal phosphate)lysine modification is found at Lys69. Residues Asn95, 196 to 200 (GNAGN), and Thr326 contribute to the pyridoxal 5'-phosphate site.

This sequence belongs to the threonine synthase family. As to quaternary structure, homodimer. Requires pyridoxal 5'-phosphate as cofactor.

The catalysed reaction is O-phospho-L-homoserine + H2O = L-threonine + phosphate. It participates in amino-acid biosynthesis; L-threonine biosynthesis; L-threonine from L-aspartate: step 5/5. Functionally, catalyzes the gamma-elimination of phosphate from L-phosphohomoserine and the beta-addition of water to produce L-threonine. In Mycobacterium leprae (strain TN), this protein is Threonine synthase (thrC).